The primary structure comprises 248 residues: MKFIAVLIAAIASLSAVQAQKAIPYDTVVPIPSQTSKTDAQKAAVKYHPQLHIEDGCHPYAAVQADGAISDGLKWSGPQDGACKGSPLGSQVYARSTWVKGKWAIMYAWYFPMGQAPVPPVGLGHRNGWEYAVIWLDRPTADNSTLLGVSLSAAVGWSKEAPAKQKWMDGNSLKVSYYYNNIFRNTAVKYTEEKGEFQTLITWDQLPDAARNALINTDWDETPFNVARVKMPMKDGVFMEKLTGAYPF.

A signal peptide spans M1 to A19. The Hepta-peptide GHRHDWE motif signature appears at G124–E130. The N-linked (GlcNAc...) asparagine glycan is linked to N143.

The protein belongs to the Necrosis inducing protein (NPP1) family.

It is found in the secreted. Secreted effector that contributes strongly to virulence during infection by P.capsici. The polypeptide is NLP effector protein Pc121494 (Phytophthora capsici).